The following is a 379-amino-acid chain: Sulfate adenylyltransferase (379 aa).

Belongs to the sulfate adenylyltransferase family.

The catalysed reaction is sulfate + ATP + H(+) = adenosine 5'-phosphosulfate + diphosphate. Its pathway is sulfur metabolism; hydrogen sulfide biosynthesis; sulfite from sulfate: step 1/3. This is Sulfate adenylyltransferase from Cenarchaeum symbiosum (strain A).